A 1530-amino-acid chain; its full sequence is Multidrug resistance-associated protein 1 (1530 aa).

Residues 1–33 are Extracellular-facing; it reads MALRDFCSVDGSDLFWEWNVTWNTSNPDFTKCF. A glycan (N-linked (GlcNAc...) asparagine) is linked at Asn19. Residues 34-54 traverse the membrane as a helical segment; it reads QNTVLVWVPCSYLWVCFPFYF. Residues 55–74 are Cytoplasmic-facing; that stretch reads LYLSHHDRGYIQMTHLNKAK. A helical transmembrane segment spans residues 75–95; that stretch reads TALGFLLWIVCWADLFYSFWE. Residues 96-100 are Extracellular-facing; that stretch reads RSMGK. The helical transmembrane segment at 101-121 threads the bilayer; sequence LLAPVFLVSPTLLGITMLLAT. The Cytoplasmic portion of the chain corresponds to 122–133; sequence FLIQIERRRGVQ. Residues 134-154 traverse the membrane as a helical segment; that stretch reads SSGIMLTFWLIALLCALAILR. At 155–172 the chain is on the extracellular side; that stretch reads SKIMTALKEDARVDVFRD. Residues 173–193 form a helical membrane-spanning segment; that stretch reads VTFYIYFSLVLIQLVLSCFSD. At 194-316 the chain is on the cytoplasmic side; the sequence is RSPLFSETIN…KERDPSLFKV (123 aa). At Tyr277 the chain carries Phosphotyrosine. Position 289 is a phosphoserine (Ser289). Residues 317–337 traverse the membrane as a helical segment; it reads LYKTFGPYFLMSFLFKAVHDL. Residues 325-608 enclose the ABC transmembrane type-1 1 domain; the sequence is FLMSFLFKAV…LPMVISSIVQ (284 aa). The Extracellular segment spans residues 338–363; that stretch reads MMFAGPEILKLLINFVNDKKAPEWQG. The helical transmembrane segment at 364–384 threads the bilayer; that stretch reads YFYTALLFISACLQTLVLHQY. Residues 385–440 lie on the Cytoplasmic side of the membrane; the sequence is FHICFVSGMRIKTAVIGAVYRKALVITNAARKSSTVGEIVNLMSVDAQRFMDLATY. A helical transmembrane segment spans residues 441–461; the sequence is INMIWSAPLQVILALYLLWLN. Over 462–464 the chain is Extracellular; the sequence is LGP. Residues 465–485 traverse the membrane as a helical segment; it reads SVLAGVAVMVLMVPLNAVMAM. Topologically, residues 486 to 547 are cytoplasmic; it reads KTKTYQVAHM…VLKKSAYLAA (62 aa). Lys503 is modified (N6-succinyllysine). Residues 548–568 traverse the membrane as a helical segment; sequence VGTFTWVCTPFLVALSTFAVY. The Extracellular segment spans residues 569–590; the sequence is VTVDENNILDAQKAFVSLALFN. Residues 591–611 traverse the membrane as a helical segment; that stretch reads ILRFPLNILPMVISSIVQASV. Residues 612–966 are Cytoplasmic-facing; it reads SLKRLRVFLS…VKLSVYWDYM (355 aa). One can recognise an ABC transporter 1 domain in the interval 644 to 868; that stretch reads ITVKNATFTW…DGAFAEFLRT (225 aa). 678–685 contacts ATP; sequence GQVGCGKS. Residues 912 to 939 are disordered; sequence RQLSSSSSYSRDVSQHHTSTAELRKPGP. Phosphoserine is present on residues Ser915 and Ser930. A helical transmembrane segment spans residues 967-987; sequence KAIGLFISFLSIFLFLCNHVA. The region spanning 974–1255 is the ABC transmembrane type-1 2 domain; that stretch reads SFLSIFLFLC…LVRMSSEMET (282 aa). The Extracellular portion of the chain corresponds to 988-1024; it reads SLVSNYWLSLWTDDPIVNGTQEHTQVRLSVYGALGIS. Asn1005 carries an N-linked (GlcNAc...) asparagine glycan. Residues 1025–1045 form a helical membrane-spanning segment; the sequence is QGITVFGYSMAVSIGGIFASR. Residues 1046-1088 are Cytoplasmic-facing; that stretch reads RLHLDLLHNVLRSPISFFERTPSGNLVNRFSKELDTVDSMIPQ. A helical membrane pass occupies residues 1089–1109; the sequence is VIKMFMGSLFNVIGACIIILL. Ala1110 is a topological domain (extracellular). The helical transmembrane segment at 1111–1131 threads the bilayer; it reads TPMAAVIIPPLGLIYFFVQRF. The Cytoplasmic segment spans residues 1132-1202; the sequence is YVASSRQLKR…VANRWLAVRL (71 aa). A helical membrane pass occupies residues 1203–1223; it reads ECVGNCIVLFASLFAVISRHS. The Extracellular segment spans residues 1224–1225; the sequence is LS. A helical membrane pass occupies residues 1226–1246; that stretch reads AGLVGLSVSYSLQVTTYLNWL. Topologically, residues 1247–1530 are cytoplasmic; the sequence is VRMSSEMETN…YSMAKDSGLV (284 aa). Residues 1292 to 1526 form the ABC transporter 2 domain; sequence VEFRDYGLRY…RGLFYSMAKD (235 aa). 1326 to 1333 lines the ATP pocket; it reads GRTGAGKS.

The protein belongs to the ABC transporter superfamily. ABCC family. Conjugate transporter (TC 3.A.1.208) subfamily. In terms of tissue distribution, expressed in heart, spleen, lung, kidney, skeletal muscle, mammary gland and weaker in brain and liver.

Its subcellular location is the cell membrane. It is found in the basolateral cell membrane. It catalyses the reaction ATP + H2O + xenobioticSide 1 = ADP + phosphate + xenobioticSide 2.. The catalysed reaction is an S-substituted glutathione(in) + ATP + H2O = an S-substituted glutathione(out) + ADP + phosphate + H(+). The enzyme catalyses sphing-4-enine 1-phosphate(in) + ATP + H2O = sphing-4-enine 1-phosphate(out) + ADP + phosphate + H(+). It carries out the reaction leukotriene C4(in) + ATP + H2O = leukotriene C4(out) + ADP + phosphate + H(+). It catalyses the reaction 17beta-estradiol 17-O-(beta-D-glucuronate)(in) + ATP + H2O = 17beta-estradiol 17-O-(beta-D-glucuronate)(out) + ADP + phosphate + H(+). The catalysed reaction is daunorubicin(in) + ATP + H2O = daunorubicin(out) + ADP + phosphate + H(+). The enzyme catalyses vincristine(in) + ATP + H2O = vincristine(out) + ADP + phosphate + H(+). It carries out the reaction 2',3'-cGAMP(in) + ATP + H2O = 2',3'-cGAMP(out) + ADP + phosphate + H(+). It catalyses the reaction S-[(2E,6E,10E)-geranylgeranyl]-L-glutathione(in) + ATP + H2O = S-[(2E,6E,10E)-geranylgeranyl]-L-glutathione(out) + ADP + phosphate + H(+). The catalysed reaction is prostaglandin A2-S-(R)-glutathione(in) + ATP + H2O = prostaglandin A2-S-(R)-glutathione(out) + ADP + phosphate + H(+). The enzyme catalyses prostaglandin A2-S-(S)-glutathione(in) + ATP + H2O = prostaglandin A2-S-(S)-glutathione(out) + ADP + phosphate + H(+). With respect to regulation, MK 571 inhibits sphingosine 1-phosphate and leukotriene C4 export. Functionally, mediates export of organic anions and drugs from the cytoplasm. Mediates ATP-dependent transport of glutathione and glutathione conjugates, leukotriene C4, estradiol-17-beta-o-glucuronide, methotrexate, antiviral drugs and other xenobiotics. Confers resistance to anticancer drugs by decreasing accumulation of drug in cells, and by mediating ATP- and GSH-dependent drug export. Hydrolyzes ATP with low efficiency. Catalyzes the export of sphingosine 1-phosphate from mast cells independently of their degranulation. Participates in inflammatory response by allowing export of leukotriene C4 from leukotriene C4-synthesizing cells. Mediates ATP-dependent, GSH-independent cyclic GMP-AMP (cGAMP) export. Thus, by limiting intracellular cGAMP concentrations negatively regulates the cGAS-STING pathway. Exports S-geranylgeranyl-glutathione (GGG) in lymphoid cells and stromal compartments of lymphoid organs. ABCC1 (via extracellular transport) with GGT5 (via GGG catabolism) establish GGG gradients within lymphoid tissues to position P2RY8-positive lymphocytes at germinal centers in lymphoid follicles and restrict their chemotactic transmigration from blood vessels to the bone marrow parenchyma. Mediates basolateral export of GSH-conjugated R- and S-prostaglandin A2 diastereomers in polarized epithelial cells. This Bos taurus (Bovine) protein is Multidrug resistance-associated protein 1.